A 189-amino-acid polypeptide reads, in one-letter code: Nucleoside triphosphate pyrophosphatase (189 aa).

The active-site Proton acceptor is D70.

Belongs to the Maf family. A divalent metal cation is required as a cofactor.

Its subcellular location is the cytoplasm. The catalysed reaction is a ribonucleoside 5'-triphosphate + H2O = a ribonucleoside 5'-phosphate + diphosphate + H(+). The enzyme catalyses a 2'-deoxyribonucleoside 5'-triphosphate + H2O = a 2'-deoxyribonucleoside 5'-phosphate + diphosphate + H(+). Nucleoside triphosphate pyrophosphatase. May have a dual role in cell division arrest and in preventing the incorporation of modified nucleotides into cellular nucleic acids. This is Nucleoside triphosphate pyrophosphatase from Xylella fastidiosa (strain M23).